The sequence spans 565 residues: Tetratricopeptide repeat protein 39A (565 aa).

TPR repeat units follow at residues 271–304, 461–494, and 502–535; these read AIFL…QQVW, CLIQ…EKKL, and PNAL…YKVY.

Belongs to the TTC39 family.

The chain is Tetratricopeptide repeat protein 39A (ttc39a) from Danio rerio (Zebrafish).